A 298-amino-acid chain; its full sequence is HTH-type transcriptional regulator ArgP (298 aa).

In terms of domain architecture, HTH lysR-type spans 4-60 (LDYKWIEALDAVVAQGGFERAAEELYISQSAVSQRIKQLERFLAQSVLIREQPPKPT). Positions 21 to 40 (FERAAEELYISQSAVSQRIK) form a DNA-binding region, H-T-H motif.

The protein belongs to the LysR transcriptional regulatory family. As to quaternary structure, homodimer.

Its function is as follows. Controls the transcription of genes involved in arginine and lysine metabolism. This chain is HTH-type transcriptional regulator ArgP, found in Vibrio vulnificus (strain YJ016).